The primary structure comprises 143 residues: MAPKKKVSALIKLQIQAGKANPAPPLGPALGSHGVNIMDFCKAYNAQTQDKMGQVIPVEITVYEDRSFTFVLKTPPAAALLKKAAGIEKGTENPLTHKVGSVTKAQVREIAETKMEDLSARDIEAGMKIIEGTARSMGITVTD.

This sequence belongs to the universal ribosomal protein uL11 family. As to quaternary structure, part of the ribosomal stalk of the 50S ribosomal subunit. Interacts with L10 and the large rRNA to form the base of the stalk. L10 forms an elongated spine to which L12 dimers bind in a sequential fashion forming a multimeric L10(L12)X complex. One or more lysine residues are methylated.

Forms part of the ribosomal stalk which helps the ribosome interact with GTP-bound translation factors. This chain is Large ribosomal subunit protein uL11, found in Bifidobacterium longum subsp. infantis (strain ATCC 15697 / DSM 20088 / JCM 1222 / NCTC 11817 / S12).